The primary structure comprises 170 residues: Photosystem I assembly protein Ycf3 (170 aa).

3 TPR repeats span residues 35–68 (AFTY…EIDP), 72–105 (SYIL…NPFL), and 120–153 (GEQA…TPGN).

Belongs to the Ycf3 family.

The protein resides in the plastid. The protein localises to the chloroplast thylakoid membrane. Essential for the assembly of the photosystem I (PSI) complex. May act as a chaperone-like factor to guide the assembly of the PSI subunits. This is Photosystem I assembly protein Ycf3 from Zea mays (Maize).